The following is a 361-amino-acid chain: MPGCPCPGCGMAGQRLLFLTVLALELLERAGGSQPALRSLGAAAACRLDNKESESWGALLSGERLDTWICSLLGSLMVGLSGVFPLLVIPLEMGTLLQSEAGAWRLRQLLSFALGGLLGNVFLHLLPEAWAYTCNITPGGEGQSLQRQQQLGLWVIAGFLTFLALEKMFLNSKEDPSQAPSKDPTAAALNGGHCLAQPAAEPGLRAVVRNLKVSGYLNLLANTIDNFTHGLAVAASFLVSKKIGLLTTMAILLHEIPHEVGDFAILLRAGFDRWTAAKLQFSTALGGLLGACFAICTQSPKGVEETVVWILPFTSGGFLYIALVNVLPDLLEEDDPWHSLQQVLLLCSGVLVMVLLSLFVE.

The Lumenal portion of the chain corresponds to 1–6 (MPGCPC). Residues 7–27 (PGCGMAGQRLLFLTVLALELL) traverse the membrane as a helical segment. Over 28–68 (ERAGGSQPALRSLGAAAACRLDNKESESWGALLSGERLDTW) the chain is Cytoplasmic. The chain crosses the membrane as a helical span at residues 69-89 (ICSLLGSLMVGLSGVFPLLVI). The Lumenal segment spans residues 90–108 (PLEMGTLLQSEAGAWRLRQ). The chain crosses the membrane as a helical span at residues 109–129 (LLSFALGGLLGNVFLHLLPEA). At 130–150 (WAYTCNITPGGEGQSLQRQQQ) the chain is on the cytoplasmic side. The chain crosses the membrane as a helical span at residues 151–171 (LGLWVIAGFLTFLALEKMFLN). The Lumenal portion of the chain corresponds to 172-232 (SKEDPSQAPS…TIDNFTHGLA (61 aa)). A helical membrane pass occupies residues 233–253 (VAASFLVSKKIGLLTTMAILL). Positions 254–259 (HEIPHE) match the XEXPHE-motif motif. Over 254–275 (HEIPHEVGDFAILLRAGFDRWT) the chain is Cytoplasmic. Residues 276–296 (AAKLQFSTALGGLLGACFAIC) form a helical membrane-spanning segment. The Lumenal portion of the chain corresponds to 297 to 306 (TQSPKGVEET). Residues 307–327 (VVWILPFTSGGFLYIALVNVL) form a helical membrane-spanning segment. Residues 328-339 (PDLLEEDDPWHS) lie on the Cytoplasmic side of the membrane. A helical transmembrane segment spans residues 340 to 360 (LQQVLLLCSGVLVMVLLSLFV). Residue Glu361 is a topological domain, lumenal.

This sequence belongs to the ZIP transporter (TC 2.A.5) family. Homodimer. In terms of tissue distribution, highly expressed in some tissues such as bone and eye. Expressed in osteoblasts of tibia and of alveolar bone, in proliferative zone of growth plate, and in odontoblasts on the forming of the dentine of crown in molar tooth. Also expressed fibroblasts in reticular layer of dermis of skin.

Its subcellular location is the golgi apparatus membrane. It localises to the cytoplasmic vesicle membrane. It is found in the endoplasmic reticulum membrane. The catalysed reaction is Zn(2+)(in) = Zn(2+)(out). Functionally, functions as a zinc transporter transporting Zn(2+) from the Golgi apparatus to the cytosol and thus influences the zinc level at least in areas of the cytosol. May regulate beige adipocyte differentiation. The polypeptide is Zinc transporter ZIP13 (Mus musculus (Mouse)).